The chain runs to 263 residues: 4-hydroxy-tetrahydrodipicolinate reductase (263 aa).

NAD(+) is bound by residues 8 to 13, D34, 99 to 101, and 125 to 128; these read GACGRM, GTT, and SPNY. H157 (proton donor/acceptor) is an active-site residue. H158 serves as a coordination point for (S)-2,3,4,5-tetrahydrodipicolinate. K161 (proton donor) is an active-site residue. Residue 167–168 coordinates (S)-2,3,4,5-tetrahydrodipicolinate; it reads GT.

The protein belongs to the DapB family.

It is found in the cytoplasm. The catalysed reaction is (S)-2,3,4,5-tetrahydrodipicolinate + NAD(+) + H2O = (2S,4S)-4-hydroxy-2,3,4,5-tetrahydrodipicolinate + NADH + H(+). It catalyses the reaction (S)-2,3,4,5-tetrahydrodipicolinate + NADP(+) + H2O = (2S,4S)-4-hydroxy-2,3,4,5-tetrahydrodipicolinate + NADPH + H(+). It participates in amino-acid biosynthesis; L-lysine biosynthesis via DAP pathway; (S)-tetrahydrodipicolinate from L-aspartate: step 4/4. Catalyzes the conversion of 4-hydroxy-tetrahydrodipicolinate (HTPA) to tetrahydrodipicolinate. The sequence is that of 4-hydroxy-tetrahydrodipicolinate reductase from Methanosarcina mazei (strain ATCC BAA-159 / DSM 3647 / Goe1 / Go1 / JCM 11833 / OCM 88) (Methanosarcina frisia).